A 251-amino-acid polypeptide reads, in one-letter code: Small ribosomal subunit protein uS3 (251 aa).

The KH type-2 domain maps to 39 to 109 (IRNYVLARLK…EVKIDVVEVI (71 aa)). Positions 221–239 (EMKRMKDRRADSKSRPRDP) are enriched in basic and acidic residues. A disordered region spans residues 221-251 (EMKRMKDRRADSKSRPRDPRSKRRRSRTKRA). Basic residues predominate over residues 240 to 251 (RSKRRRSRTKRA).

This sequence belongs to the universal ribosomal protein uS3 family. In terms of assembly, part of the 30S ribosomal subunit. Forms a tight complex with proteins S10 and S14.

Its function is as follows. Binds the lower part of the 30S subunit head. Binds mRNA in the 70S ribosome, positioning it for translation. The protein is Small ribosomal subunit protein uS3 of Chlorobium limicola (strain DSM 245 / NBRC 103803 / 6330).